The primary structure comprises 209 residues: NAD-reducing hydrogenase HoxS subunit delta (209 aa).

In terms of assembly, tetramer of an alpha and a gamma subunits (flavin-containing dimer), and a delta and a nickel-containing beta subunits (hydrogenase dimer). [4Fe-4S] cluster serves as cofactor. Requires [3Fe-4S] cluster as cofactor. It depends on [2Fe-2S] cluster as a cofactor. The cofactor is FMN. Ni(2+) is required as a cofactor.

The protein localises to the cytoplasm. The enzyme catalyses H2 + NAD(+) = NADH + H(+). This is NAD-reducing hydrogenase HoxS subunit delta (hoxY) from Cupriavidus necator (strain ATCC 17699 / DSM 428 / KCTC 22496 / NCIMB 10442 / H16 / Stanier 337) (Ralstonia eutropha).